The sequence spans 79 residues: Moronecidin (79 aa).

An N-terminal signal peptide occupies residues 1–22; the sequence is MKCATLSLVLSMVVLMAEPGDA. Gly-44 is modified (glycine amide). Positions 45 to 68 are disordered; sequence GKAEQDQQDQQYQQDQQDQQAQQY. The propeptide occupies 47–79; the sequence is AEQDQQDQQYQQDQQDQQAQQYQRFNRERAAFD. The segment covering 52–68 has biased composition (low complexity); the sequence is QDQQYQQDQQDQQAQQY.

In terms of tissue distribution, expressed in gill, skin, intestine, spleen, anterior kidney, and blood cells.

It is found in the secreted. In terms of biological role, antimicrobial peptide with broad-spectrum activity against Gram-positive and Gram-negative bacteria as well as against a variety of fungi. Rapidly inactivates both channel catfish herpesvirus (ED(50)=4 uM) and frog virus 3 (ED(50)=13 uM) over a wide temperature range. Seems to disrupt the membranes by adopting an alpha helical conformation. The sequence is that of Moronecidin from Morone chrysops (White bass).